The following is a 297-amino-acid chain: Phosphoribosylaminoimidazole-succinocarboxamide synthase (297 aa).

This sequence belongs to the SAICAR synthetase family.

It catalyses the reaction 5-amino-1-(5-phospho-D-ribosyl)imidazole-4-carboxylate + L-aspartate + ATP = (2S)-2-[5-amino-1-(5-phospho-beta-D-ribosyl)imidazole-4-carboxamido]succinate + ADP + phosphate + 2 H(+). It functions in the pathway purine metabolism; IMP biosynthesis via de novo pathway; 5-amino-1-(5-phospho-D-ribosyl)imidazole-4-carboxamide from 5-amino-1-(5-phospho-D-ribosyl)imidazole-4-carboxylate: step 1/2. In Mycobacterium sp. (strain JLS), this protein is Phosphoribosylaminoimidazole-succinocarboxamide synthase.